The primary structure comprises 251 residues: 5'-nucleotidase SurE (251 aa).

A divalent metal cation-binding residues include Asp-8, Asp-9, Ser-40, and Asn-95.

The protein belongs to the SurE nucleotidase family. It depends on a divalent metal cation as a cofactor.

It is found in the cytoplasm. The enzyme catalyses a ribonucleoside 5'-phosphate + H2O = a ribonucleoside + phosphate. Functionally, nucleotidase that shows phosphatase activity on nucleoside 5'-monophosphates. In Maridesulfovibrio salexigens (strain ATCC 14822 / DSM 2638 / NCIMB 8403 / VKM B-1763) (Desulfovibrio salexigens), this protein is 5'-nucleotidase SurE.